The sequence spans 134 residues: MIIGIGSDLCDIRRVERTLERFGERFIQRVFTETERRRAARRPAQFAATLAKRFAAKEACAKALGTGFRRGVFMSDLGVVNLPSGQPTLALTGGAAERLAALTPPGRSAFVHLSLTDEYPYAYAHVIIEARDGA.

2 residues coordinate Mg(2+): D8 and E58.

The protein belongs to the P-Pant transferase superfamily. AcpS family. Requires Mg(2+) as cofactor.

It is found in the cytoplasm. It catalyses the reaction apo-[ACP] + CoA = holo-[ACP] + adenosine 3',5'-bisphosphate + H(+). Functionally, transfers the 4'-phosphopantetheine moiety from coenzyme A to a Ser of acyl-carrier-protein. In Acidiphilium cryptum (strain JF-5), this protein is Holo-[acyl-carrier-protein] synthase.